The primary structure comprises 511 residues: Archaeal glutamate synthase [NADPH] (511 aa).

4Fe-4S ferredoxin-type domains follow at residues phenylalanine 15–glutamate 44 and aspartate 46–histidine 75. Residues cysteine 24, cysteine 27, cysteine 30, cysteine 34, cysteine 55, cysteine 58, cysteine 61, and cysteine 65 each coordinate [4Fe-4S] cluster.

Belongs to the glutamate synthase family. It depends on FMN as a cofactor.

It carries out the reaction 2 L-glutamate + NADP(+) = L-glutamine + 2-oxoglutarate + NADPH + H(+). This Archaeoglobus fulgidus (strain ATCC 49558 / DSM 4304 / JCM 9628 / NBRC 100126 / VC-16) protein is Archaeal glutamate synthase [NADPH].